A 1161-amino-acid chain; its full sequence is Integrin alpha-D (1161 aa).

Residues 1 to 17 form the signal peptide; sequence MTFGTVLLLSVLASYHG. Residues 18-1099 lie on the Extracellular side of the membrane; the sequence is FNLDVEEPTI…MVLEEDEVYN (1082 aa). FG-GAP repeat units lie at residues 19–76 and 77–136; these read NLDV…MCQP and IPLH…IIQT. The N-linked (GlcNAc...) asparagine glycan is linked to Asn59. A disulfide bond links Cys67 and Cys74. Asn87 and Asn99 each carry an N-linked (GlcNAc...) asparagine glycan. Cys106 and Cys124 form a disulfide bridge. Positions 150-332 constitute a VWFA domain; the sequence is DIVFLIDGSG…SIQKQLQEKI (183 aa). FG-GAP repeat units follow at residues 339-390, 391-442, 443-503, 506-564, and 569-629; these read QSRA…PTFI, NMSQ…SRQW, RKKA…RVQW, DAVL…SGIS, and QRIA…FSPV. Asn391 carries N-linked (GlcNAc...) asparagine glycosylation. Positions 465, 467, 469, 473, 529, 531, 533, 537, 592, 596, and 600 each coordinate Ca(2+). Residues Cys654 and Cys709 are joined by a disulfide bond. Residues Asn690 and Asn732 are each glycosylated (N-linked (GlcNAc...) asparagine). Disulfide bonds link Cys768/Cys774 and Cys845/Cys860. N-linked (GlcNAc...) asparagine glycans are attached at residues Asn872 and Asn956. Intrachain disulfides connect Cys993-Cys1017 and Cys1022-Cys1027. An N-linked (GlcNAc...) asparagine glycan is attached at Asn1045. Residues 1100 to 1120 form a helical membrane-spanning segment; it reads AIPIIMGSSVGALLLLALITA. The Cytoplasmic portion of the chain corresponds to 1121 to 1161; that stretch reads TLYKLGFFKRHYKEMLEDKPEDTATFSGDDFSCVAPNVPLS. Positions 1126 to 1130 match the GFFKR motif motif; the sequence is GFFKR.

This sequence belongs to the integrin alpha chain family. As to quaternary structure, heterodimer of an alpha and a beta subunit. Alpha-D associates with beta-2. In terms of tissue distribution, expressed moderately on myelomonocytic cell lines and subsets of peripheral blood leukocytes and strongly on tissue-specialized cells, including macrophages foam cells within atherosclerotic plaques, and on splenic red pulp macrophages.

The protein localises to the membrane. Functionally, integrin alpha-D/beta-2 is a receptor for ICAM3 and VCAM1. May play a role in the atherosclerotic process such as clearing lipoproteins from plaques and in phagocytosis of blood-borne pathogens, particulate matter, and senescent erythrocytes from the blood. This is Integrin alpha-D (ITGAD) from Homo sapiens (Human).